The primary structure comprises 131 residues: D-ribose pyranase (131 aa).

His-20 (proton donor) is an active-site residue. Residues Asp-28, His-98, and Tyr-120 to Asn-122 contribute to the substrate site.

This sequence belongs to the RbsD / FucU family. RbsD subfamily. In terms of assembly, homodecamer.

The protein resides in the cytoplasm. It carries out the reaction beta-D-ribopyranose = beta-D-ribofuranose. Its pathway is carbohydrate metabolism; D-ribose degradation; D-ribose 5-phosphate from beta-D-ribopyranose: step 1/2. Functionally, catalyzes the interconversion of beta-pyran and beta-furan forms of D-ribose. The polypeptide is D-ribose pyranase (Limosilactobacillus fermentum (strain NBRC 3956 / LMG 18251) (Lactobacillus fermentum)).